The following is a 451-amino-acid chain: ATP-dependent protease ATPase subunit HslU (451 aa).

Residues isoleucine 26, 68–73, aspartate 263, glutamate 328, and arginine 400 contribute to the ATP site; that span reads GVGKTE.

The protein belongs to the ClpX chaperone family. HslU subfamily. As to quaternary structure, a double ring-shaped homohexamer of HslV is capped on each side by a ring-shaped HslU homohexamer. The assembly of the HslU/HslV complex is dependent on binding of ATP.

It localises to the cytoplasm. Functionally, ATPase subunit of a proteasome-like degradation complex; this subunit has chaperone activity. The binding of ATP and its subsequent hydrolysis by HslU are essential for unfolding of protein substrates subsequently hydrolyzed by HslV. HslU recognizes the N-terminal part of its protein substrates and unfolds these before they are guided to HslV for hydrolysis. This chain is ATP-dependent protease ATPase subunit HslU, found in Dichelobacter nodosus (strain VCS1703A).